Reading from the N-terminus, the 373-residue chain is Outer membrane protein assembly factor BamC (373 aa).

The first 16 residues, 1–16 (MLKQVTPLVLIAAVTA), serve as a signal peptide directing secretion. A lipid anchor (N-palmitoyl cysteine) is attached at cysteine 17. The S-diacylglycerol cysteine moiety is linked to residue cysteine 17.

This sequence belongs to the BamC family. As to quaternary structure, part of the Bam complex.

It localises to the cell outer membrane. Its function is as follows. Part of the outer membrane protein assembly complex, which is involved in assembly and insertion of beta-barrel proteins into the outer membrane. The sequence is that of Outer membrane protein assembly factor BamC from Shewanella sediminis (strain HAW-EB3).